The following is a 193-amino-acid chain: dCTP deaminase (193 aa).

DCTP contacts are provided by residues 110-115 (RSSLAR), aspartate 128, 136-138 (VLE), tyrosine 171, lysine 178, and glutamine 182. Glutamate 138 (proton donor/acceptor) is an active-site residue. The disordered stretch occupies residues 174 to 193 (RKNAKYKDQQEAVASRISQD).

Belongs to the dCTP deaminase family. Homotrimer.

The catalysed reaction is dCTP + H2O + H(+) = dUTP + NH4(+). It participates in pyrimidine metabolism; dUMP biosynthesis; dUMP from dCTP (dUTP route): step 1/2. In terms of biological role, catalyzes the deamination of dCTP to dUTP. The protein is dCTP deaminase of Shewanella sp. (strain W3-18-1).